The following is a 340-amino-acid chain: MKIVIDGMGGDNAPKSNVEGAVNAIKEYQVDLIITGDKDLLEKEFSNYEFDRNKLEIVHTTEIIENEDKPVKAIRSKKDSSMVVALNLVKEGKADAIISAGNTGALLAGGLFVVGRIKGIDRPCLCSAIPNVKRGMTLIADCGANADCKPKNLVEFAAMSNIYSRKVLGLENPKVALANVGLEEGKGNDLVKRSYEEIKKLDLNFIGNVEAREVINAYTDIIICDGFTGNILLKSAEGVALSVMSLIKETFMASTKSKIGALLIKDDLRKLKSFIDYSEYGGAPLLGLNGGVIKAHGSSDAKAIKNAINQGIKFSKGKVVEDINQFISKYNEENKNNEDE.

The protein belongs to the PlsX family. In terms of assembly, homodimer. Probably interacts with PlsY.

It is found in the cytoplasm. The enzyme catalyses a fatty acyl-[ACP] + phosphate = an acyl phosphate + holo-[ACP]. Its pathway is lipid metabolism; phospholipid metabolism. Its function is as follows. Catalyzes the reversible formation of acyl-phosphate (acyl-PO(4)) from acyl-[acyl-carrier-protein] (acyl-ACP). This enzyme utilizes acyl-ACP as fatty acyl donor, but not acyl-CoA. In Clostridioides difficile (strain 630) (Peptoclostridium difficile), this protein is Phosphate acyltransferase.